The primary structure comprises 461 residues: Bifunctional protein GlmU (461 aa).

Positions 1–230 (MECLMAVILA…SSEILGINDR (230 aa)) are pyrophosphorylase. UDP-N-acetyl-alpha-D-glucosamine contacts are provided by residues 9–12 (LAAG), Lys23, Gln73, 78–79 (GT), 101–103 (YGD), Gly140, Glu155, Asn170, and Asn228. Asp103 provides a ligand contact to Mg(2+). Asn228 lines the Mg(2+) pocket. The linker stretch occupies residues 231–251 (VQLAEAGRIIRSRILKRHMKN). Residues 252–461 (GVTIIDPDST…KKGMLRQEKE (210 aa)) are N-acetyltransferase. UDP-N-acetyl-alpha-D-glucosamine is bound by residues Arg333 and Lys351. The Proton acceptor role is filled by His363. 2 residues coordinate UDP-N-acetyl-alpha-D-glucosamine: Tyr366 and Asn377. Acetyl-CoA-binding positions include 386–387 (NY), Ala423, and Arg440.

This sequence in the N-terminal section; belongs to the N-acetylglucosamine-1-phosphate uridyltransferase family. The protein in the C-terminal section; belongs to the transferase hexapeptide repeat family. As to quaternary structure, homotrimer. Mg(2+) is required as a cofactor.

It localises to the cytoplasm. It catalyses the reaction alpha-D-glucosamine 1-phosphate + acetyl-CoA = N-acetyl-alpha-D-glucosamine 1-phosphate + CoA + H(+). The enzyme catalyses N-acetyl-alpha-D-glucosamine 1-phosphate + UTP + H(+) = UDP-N-acetyl-alpha-D-glucosamine + diphosphate. It functions in the pathway nucleotide-sugar biosynthesis; UDP-N-acetyl-alpha-D-glucosamine biosynthesis; N-acetyl-alpha-D-glucosamine 1-phosphate from alpha-D-glucosamine 6-phosphate (route II): step 2/2. The protein operates within nucleotide-sugar biosynthesis; UDP-N-acetyl-alpha-D-glucosamine biosynthesis; UDP-N-acetyl-alpha-D-glucosamine from N-acetyl-alpha-D-glucosamine 1-phosphate: step 1/1. Its pathway is bacterial outer membrane biogenesis; LPS lipid A biosynthesis. In terms of biological role, catalyzes the last two sequential reactions in the de novo biosynthetic pathway for UDP-N-acetylglucosamine (UDP-GlcNAc). The C-terminal domain catalyzes the transfer of acetyl group from acetyl coenzyme A to glucosamine-1-phosphate (GlcN-1-P) to produce N-acetylglucosamine-1-phosphate (GlcNAc-1-P), which is converted into UDP-GlcNAc by the transfer of uridine 5-monophosphate (from uridine 5-triphosphate), a reaction catalyzed by the N-terminal domain. In Acetivibrio thermocellus (strain ATCC 27405 / DSM 1237 / JCM 9322 / NBRC 103400 / NCIMB 10682 / NRRL B-4536 / VPI 7372) (Clostridium thermocellum), this protein is Bifunctional protein GlmU.